The following is a 360-amino-acid chain: MVCSSQLVPRIQGWARELGFSQIGVAGVDLSAAEPGLMQWLAEGFHGEMHYMAAHGLRRARPAELVPGTVSVITARMDYLPRTTPEGWQAVEFERLRRPQEAIVSVYARGRDYHKVLRARLQKLSDRIAEAVGPFGHRVFTDSAPVLEAELARRSGQGWRGKHTLVLSREAGSMFFLGEIYLDMALAPTEPVTAHCGSCQACMDVCPTQAIVAPHRVDARRCISYLTIEHAGPIPPALRPLMGNRIYGCDDCQLICPWNKFAQPSSLPDFDARAPLEGQQLAQLFAWDEAMFLRMTEGGPIRRIGHERWLRNIAVALGNALRATRDAGEAGALRAALATRANDASALVREHVAWALAQGI.

Residue Asp142 is the Proton donor of the active site. One can recognise a 4Fe-4S ferredoxin-type domain in the interval 187–216; the sequence is APTEPVTAHCGSCQACMDVCPTQAIVAPHR. Residues Cys196, Cys199, Cys202, Cys206, Cys222, Cys249, Cys252, and Cys256 each coordinate [4Fe-4S] cluster.

It belongs to the QueG family. Monomer. The cofactor is cob(II)alamin. [4Fe-4S] cluster is required as a cofactor.

It is found in the cytoplasm. It carries out the reaction epoxyqueuosine(34) in tRNA + AH2 = queuosine(34) in tRNA + A + H2O. Its pathway is tRNA modification; tRNA-queuosine biosynthesis. Its function is as follows. Catalyzes the conversion of epoxyqueuosine (oQ) to queuosine (Q), which is a hypermodified base found in the wobble positions of tRNA(Asp), tRNA(Asn), tRNA(His) and tRNA(Tyr). In Alicycliphilus denitrificans (strain DSM 14773 / CIP 107495 / K601), this protein is Epoxyqueuosine reductase.